Reading from the N-terminus, the 229-residue chain is Heptaprenylglyceryl phosphate synthase (229 aa).

Lys12 is a binding site for sn-glycerol 1-phosphate. Mg(2+) contacts are provided by Asp14 and Thr40. Sn-glycerol 1-phosphate is bound by residues Tyr159–Gly164, Gly189, and Gly209–Asn210.

It belongs to the GGGP/HepGP synthase family. Group I subfamily. As to quaternary structure, homodimer. Mg(2+) serves as cofactor.

It carries out the reaction sn-glycerol 1-phosphate + all-trans-heptaprenyl diphosphate = 3-heptaprenyl-sn-glycero-1-phosphate + diphosphate. It participates in membrane lipid metabolism; glycerophospholipid metabolism. Functionally, prenyltransferase that catalyzes in vivo the transfer of the heptaprenyl moiety of heptaprenyl pyrophosphate (HepPP; 35 carbon atoms) to the C3 hydroxyl of sn-glycerol-1-phosphate (G1P), producing heptaprenylglyceryl phosphate (HepGP). This reaction is an ether-bond-formation step in the biosynthesis of archaea-type G1P-based membrane lipids found in Bacillales. In Staphylococcus saprophyticus subsp. saprophyticus (strain ATCC 15305 / DSM 20229 / NCIMB 8711 / NCTC 7292 / S-41), this protein is Heptaprenylglyceryl phosphate synthase.